A 191-amino-acid chain; its full sequence is Probable GTP-binding protein EngB (191 aa).

Residues 13–189 (DRLEVAFAGR…RAEIVALLPD (177 aa)) form the EngB-type G domain. GTP is bound by residues 21–28 (GRSNVGKS), 48–52 (GRTRE), 67–70 (DLPG), 134–137 (TKTD), and 168–170 (TSS). Mg(2+) is bound by residues S28 and T50.

The protein belongs to the TRAFAC class TrmE-Era-EngA-EngB-Septin-like GTPase superfamily. EngB GTPase family. It depends on Mg(2+) as a cofactor.

Necessary for normal cell division and for the maintenance of normal septation. This chain is Probable GTP-binding protein EngB, found in Maricaulis maris (strain MCS10) (Caulobacter maris).